A 141-amino-acid polypeptide reads, in one-letter code: MTLEQTLAIIKPDAVERNLIGNIISRLEDKGFQIIAMKMLHLNQEQAEGFYAEHRNKAFFTELVKYMTSAPIVVLVLQKENAVKDYRTFMGTTNPEIAENGTLRYEFAINQTQNSVHGSDSLENAQREIAYFFAEAEIYAR.

6 residues coordinate ATP: K11, F59, R87, T93, R104, and N114. H117 serves as the catalytic Pros-phosphohistidine intermediate.

The protein belongs to the NDK family. In terms of assembly, homotetramer. Mg(2+) is required as a cofactor.

It localises to the cytoplasm. It carries out the reaction a 2'-deoxyribonucleoside 5'-diphosphate + ATP = a 2'-deoxyribonucleoside 5'-triphosphate + ADP. The catalysed reaction is a ribonucleoside 5'-diphosphate + ATP = a ribonucleoside 5'-triphosphate + ADP. In terms of biological role, major role in the synthesis of nucleoside triphosphates other than ATP. The ATP gamma phosphate is transferred to the NDP beta phosphate via a ping-pong mechanism, using a phosphorylated active-site intermediate. This is Nucleoside diphosphate kinase from Histophilus somni (strain 2336) (Haemophilus somnus).